We begin with the raw amino-acid sequence, 317 residues long: Ribosomal protein L11 methyltransferase (317 aa).

Positions 139, 162, 184, and 226 each coordinate S-adenosyl-L-methionine. Residues 274 to 297 (EHVATRPDPASPGGDRRAGRGDAG) form a disordered region.

This sequence belongs to the methyltransferase superfamily. PrmA family.

It localises to the cytoplasm. The enzyme catalyses L-lysyl-[protein] + 3 S-adenosyl-L-methionine = N(6),N(6),N(6)-trimethyl-L-lysyl-[protein] + 3 S-adenosyl-L-homocysteine + 3 H(+). Its function is as follows. Methylates ribosomal protein L11. This is Ribosomal protein L11 methyltransferase from Sorangium cellulosum (strain So ce56) (Polyangium cellulosum (strain So ce56)).